Consider the following 117-residue polypeptide: Large ribosomal subunit protein bL20 (117 aa).

The protein belongs to the bacterial ribosomal protein bL20 family.

Functionally, binds directly to 23S ribosomal RNA and is necessary for the in vitro assembly process of the 50S ribosomal subunit. It is not involved in the protein synthesizing functions of that subunit. In Natranaerobius thermophilus (strain ATCC BAA-1301 / DSM 18059 / JW/NM-WN-LF), this protein is Large ribosomal subunit protein bL20.